The following is a 297-amino-acid chain: ATP synthase gamma chain (297 aa).

The protein belongs to the ATPase gamma chain family. In terms of assembly, F-type ATPases have 2 components, CF(1) - the catalytic core - and CF(0) - the membrane proton channel. CF(1) has five subunits: alpha(3), beta(3), gamma(1), delta(1), epsilon(1). CF(0) has three main subunits: a, b and c.

Its subcellular location is the cell membrane. In terms of biological role, produces ATP from ADP in the presence of a proton gradient across the membrane. The gamma chain is believed to be important in regulating ATPase activity and the flow of protons through the CF(0) complex. This chain is ATP synthase gamma chain, found in Arthrobacter sp. (strain FB24).